The following is a 1266-amino-acid chain: Phosphatidylinositol 3,4,5-trisphosphate 5-phosphatase 2A (1266 aa).

An SH2 domain is found at 15–111; that stretch reads WMHRDLSRAA…GLVTTLLYPV (97 aa). Over residues 114 to 123 the composition is skewed to basic and acidic residues; that stretch reads EETTEDRDYS. Disordered stretches follow at residues 114–159 and 879–951; these read EETT…NVTA and DMGG…DATT. The segment covering 136–159 has biased composition (polar residues); it reads TASTSSMTGSALVSTDTPPENVTA. 2 stretches are compositionally biased toward basic and acidic residues: residues 915–924 and 931–944; these read RVSEEGEKSS and TKEE…KQDP. The short motif at 958–961 is the NPXY motif element; it reads NPAY. Phosphotyrosine is present on tyrosine 961. 2 disordered regions span residues 986–1132 and 1147–1174; these read PLAN…SALD and EVEY…SFPS. Positions 994-1012 are enriched in low complexity; that stretch reads PPAGSVGKSKPPSGSSAQG. Residues 1045 to 1056 are compositionally biased toward pro residues; that stretch reads RPPPDFPPPPLP. The region spanning 1203–1266 is the SAM domain; it reads SVDCSVGEWL…LLASLKQQQK (64 aa).

This sequence belongs to the inositol 1,4,5-trisphosphate 5-phosphatase family. In terms of processing, tyrosine phosphorylated by the members of the SRC family after exposure to a diverse array of extracellular stimuli.

The protein resides in the cytoplasm. The protein localises to the cytosol. It is found in the cytoskeleton. It localises to the membrane. Its subcellular location is the cell projection. The protein resides in the filopodium. The protein localises to the lamellipodium. It is found in the nucleus. It localises to the nucleus speckle. The enzyme catalyses a 1,2-diacyl-sn-glycero-3-phospho-(1D-myo-inositol-3,4,5-trisphosphate) + H2O = a 1,2-diacyl-sn-glycero-3-phospho-(1D-myo-inositol-3,4-bisphosphate) + phosphate. Its function is as follows. Phosphatidylinositol (PtdIns) phosphatase that specifically hydrolyzes the 5-phosphate of phosphatidylinositol-3,4,5-trisphosphate (PtdIns(3,4,5)P3) to produce PtdIns(3,4)P2, thereby negatively regulating the PI3K (phosphoinositide 3-kinase) pathways. Plays a central role in regulation of PI3K-dependent insulin signaling, although the precise molecular mechanisms and signaling pathways remain unclear. Part of a signaling pathway that regulates actin cytoskeleton remodeling. Required for the maintenance and dynamic remodeling of actin structures as well as in endocytosis, having a major impact on ligand-induced EGFR internalization and degradation. Participates in regulation of cortical and submembraneous actin. Regulates cell adhesion and cell spreading. Acts as a negative regulator of the FC-gamma-RIIA receptor (FCGR2A). Mediates signaling from the FC-gamma-RIIB receptor (FCGR2B), playing a central role in terminating signal transduction from activating immune/hematopoietic cell receptor systems. May also hydrolyze PtdIns(1,3,4,5)P4, and could thus affect the levels of the higher inositol polyphosphates like InsP6. The sequence is that of Phosphatidylinositol 3,4,5-trisphosphate 5-phosphatase 2A (inppl1a) from Danio rerio (Zebrafish).